Consider the following 179-residue polypeptide: Large ribosomal subunit protein uL5 (179 aa).

This sequence belongs to the universal ribosomal protein uL5 family. In terms of assembly, part of the 50S ribosomal subunit; part of the 5S rRNA/L5/L18/L25 subcomplex. Contacts the 5S rRNA and the P site tRNA. Forms a bridge to the 30S subunit in the 70S ribosome.

Functionally, this is one of the proteins that bind and probably mediate the attachment of the 5S RNA into the large ribosomal subunit, where it forms part of the central protuberance. In the 70S ribosome it contacts protein S13 of the 30S subunit (bridge B1b), connecting the 2 subunits; this bridge is implicated in subunit movement. Contacts the P site tRNA; the 5S rRNA and some of its associated proteins might help stabilize positioning of ribosome-bound tRNAs. In Lachnoclostridium phytofermentans (strain ATCC 700394 / DSM 18823 / ISDg) (Clostridium phytofermentans), this protein is Large ribosomal subunit protein uL5.